The chain runs to 134 residues: Large ribosomal subunit protein eL27 (134 aa).

A KOW domain is found at 5–40; the sequence is LKSGKVVVVLSGRFAGKKAVIVRNFDDGTSSRPYGH.

The protein belongs to the eukaryotic ribosomal protein eL27 family.

The sequence is that of Large ribosomal subunit protein eL27 (RPL27) from Pyrobotrys stellatus (Green alga).